We begin with the raw amino-acid sequence, 708 residues long: Fatty acid oxidation complex subunit alpha (708 aa).

Residues 1 to 190 (MDMEKTFNLT…KMGLVDDAVP (190 aa)) form an enoyl-CoA hydratase region. The 3-hydroxyacyl-CoA dehydrogenase stretch occupies residues 310-708 (QKVNKVMVLG…MAEEGTRFFS (399 aa)).

The protein in the N-terminal section; belongs to the enoyl-CoA hydratase/isomerase family. This sequence in the central section; belongs to the 3-hydroxyacyl-CoA dehydrogenase family. In terms of assembly, heterotetramer of two alpha chains (FadJ) and two beta chains (FadI).

It localises to the cytoplasm. It catalyses the reaction a (3S)-3-hydroxyacyl-CoA = a (2E)-enoyl-CoA + H2O. It carries out the reaction a 4-saturated-(3S)-3-hydroxyacyl-CoA = a (3E)-enoyl-CoA + H2O. The enzyme catalyses a (3S)-3-hydroxyacyl-CoA + NAD(+) = a 3-oxoacyl-CoA + NADH + H(+). The catalysed reaction is (3S)-3-hydroxybutanoyl-CoA = (3R)-3-hydroxybutanoyl-CoA. It functions in the pathway lipid metabolism; fatty acid beta-oxidation. In terms of biological role, catalyzes the formation of a hydroxyacyl-CoA by addition of water on enoyl-CoA. Also exhibits 3-hydroxyacyl-CoA epimerase and 3-hydroxyacyl-CoA dehydrogenase activities. The polypeptide is Fatty acid oxidation complex subunit alpha (Shewanella halifaxensis (strain HAW-EB4)).